The sequence spans 181 residues: Ribulose bisphosphate carboxylase small subunit, chloroplastic 1 (181 aa).

Residues 1-54 (MASSMLSSAAVVTSPAQATMVAPFTGLKSSSAFPVTRKANNDITSIVSNGGRVS) constitute a chloroplast transit peptide.

The protein belongs to the RuBisCO small chain family. Heterohexadecamer of 8 large and 8 small subunits.

It localises to the plastid. It is found in the chloroplast. Its function is as follows. RuBisCO catalyzes two reactions: the carboxylation of D-ribulose 1,5-bisphosphate, the primary event in carbon dioxide fixation, as well as the oxidative fragmentation of the pentose substrate. Both reactions occur simultaneously and in competition at the same active site. Although the small subunit is not catalytic it is essential for maximal activity. The sequence is that of Ribulose bisphosphate carboxylase small subunit, chloroplastic 1 from Brassica napus (Rape).